Reading from the N-terminus, the 160-residue chain is UPF0225 protein CGSHiEE_01665 (160 aa).

The protein belongs to the UPF0225 family.

The chain is UPF0225 protein CGSHiEE_01665 from Haemophilus influenzae (strain PittEE).